A 505-amino-acid chain; its full sequence is Proton-coupled zinc antiporter SLC30A1 (505 aa).

The Cytoplasmic segment spans residues 1 to 10 (MGCWGRNRGR). The chain crosses the membrane as a helical span at residues 11-31 (LLCMLALTFMFMVLEVVVSRV). Over 32 to 35 (TSSL) the chain is Extracellular. Residues 36–56 (AMLSDSFHMLSDVLALVVALV) traverse the membrane as a helical segment. Zn(2+)-binding residues include His-43 and Asp-47. Residues 57–80 (AERFARRTHATQKNTFGWIRAEVM) are Cytoplasmic-facing. Residues 81 to 101 (GALVNAIFLTGLCFAILLEAI) traverse the membrane as a helical segment. The Extracellular segment spans residues 102 to 113 (ERFVEPHEMQQP). The chain crosses the membrane as a helical span at residues 114–134 (LVVLGVGVAGLLVNVLGLCLF). The Cytoplasmic portion of the chain corresponds to 135-246 (HHHSGFSQDS…RAGQLNMRGV (112 aa)). Residues 142–215 (QDSGHSHSHG…DPEKPRSGDT (74 aa)) are disordered. Residues 187–199 (TNTLVANTSNSNG) are compositionally biased toward polar residues. Positions 203-214 (DPADPEKPRSGD) are enriched in basic and acidic residues. The helical transmembrane segment at 247–267 (FLHVLGDALGSVIVVVNALVF) threads the bilayer. Zn(2+)-binding residues include His-249 and Asp-253. Over 268 to 306 (YFSWKGCSEGDFCVNPCFPDPCKAFVEIINSTHASVYEA) the chain is Extracellular. N-linked (GlcNAc...) asparagine glycosylation occurs at Asn-297. A helical transmembrane segment spans residues 307–327 (GPCWVLYLDPTLCVVMVCILL). Over 328–505 (YTTYPLLKES…MPNKQPESSL (178 aa)) the chain is Cytoplasmic. Ser-504 bears the Phosphoserine mark.

This sequence belongs to the cation diffusion facilitator (CDF) transporter (TC 2.A.4) family. SLC30A subfamily. In terms of assembly, homodimer. Interacts with TMEM163. Interacts and forms a complex with TMC6 and TMC8; the interaction regulates zinc transport into the ER.

The protein resides in the cell membrane. The protein localises to the basolateral cell membrane. It is found in the cytoplasmic vesicle membrane. It localises to the cytoplasm. Its subcellular location is the endoplasmic reticulum membrane. The protein resides in the golgi apparatus membrane. The protein localises to the nucleus membrane. The catalysed reaction is Zn(2+)(in) + 2 H(+)(out) = Zn(2+)(out) + 2 H(+)(in). Functionally, zinc ion:proton antiporter that could function at the plasma membrane mediating zinc efflux from cells against its electrochemical gradient protecting them from intracellular zinc accumulation and toxicity. Alternatively, could prevent the transport to the plasma membrane of CACNB2, the L-type calcium channels regulatory subunit, through a yet to be defined mechanism. By modulating the expression of these channels at the plasma membrane, could prevent calcium and zinc influx into cells. By the same mechanism, could also prevent L-type calcium channels-mediated heavy metal influx into cells. In some cells, could also function as a zinc ion:proton antiporter mediating zinc entry into the lumen of cytoplasmic vesicles. In macrophages, can increase zinc ions concentration into the lumen of cytoplasmic vesicles containing engulfed bacteria and could help inactivate them. Forms a complex with TMC6/EVER1 and TMC8/EVER2 at the ER membrane of keratynocytes which facilitates zinc uptake into the ER. Down-regulates the activity of transcription factors induced by zinc and cytokines. The polypeptide is Proton-coupled zinc antiporter SLC30A1 (Macaca fascicularis (Crab-eating macaque)).